Consider the following 61-residue polypeptide: Small ribosomal subunit protein uS14 (61 aa).

4 residues coordinate Zn(2+): Cys-24, Cys-27, Cys-40, and Cys-43.

Belongs to the universal ribosomal protein uS14 family. Zinc-binding uS14 subfamily. As to quaternary structure, part of the 30S ribosomal subunit. Contacts proteins S3 and S10. Zn(2+) serves as cofactor.

Binds 16S rRNA, required for the assembly of 30S particles and may also be responsible for determining the conformation of the 16S rRNA at the A site. This Roseiflexus sp. (strain RS-1) protein is Small ribosomal subunit protein uS14.